The primary structure comprises 359 residues: Histidinol-phosphate aminotransferase (359 aa).

Lysine 217 is modified (N6-(pyridoxal phosphate)lysine).

Belongs to the class-II pyridoxal-phosphate-dependent aminotransferase family. Histidinol-phosphate aminotransferase subfamily. Homodimer. Pyridoxal 5'-phosphate serves as cofactor.

The enzyme catalyses L-histidinol phosphate + 2-oxoglutarate = 3-(imidazol-4-yl)-2-oxopropyl phosphate + L-glutamate. It functions in the pathway amino-acid biosynthesis; L-histidine biosynthesis; L-histidine from 5-phospho-alpha-D-ribose 1-diphosphate: step 7/9. This Roseobacter denitrificans (strain ATCC 33942 / OCh 114) (Erythrobacter sp. (strain OCh 114)) protein is Histidinol-phosphate aminotransferase.